The chain runs to 426 residues: Putative acid phosphatase 1 (426 aa).

Positions 1–18 (MRVLFYVSILVIIASVHT) are cleaved as a signal peptide. Over 19 to 388 (QLISVHVIFR…SEWVMTPLSW (370 aa)) the chain is Extracellular. H29 acts as the Nucleophile in catalysis. Residues N37 and N145 are each glycosylated (N-linked (GlcNAc...) asparagine). C133 and C369 are joined by a disulfide. D276 acts as the Proton donor in catalysis. A helical membrane pass occupies residues 389–409 (IIVAIAILLLIALILMTYFVI). Over 410–426 (RYKNRSIVNIKKLSLEN) the chain is Cytoplasmic.

The protein belongs to the histidine acid phosphatase family.

It localises to the membrane. It catalyses the reaction a phosphate monoester + H2O = an alcohol + phosphate. The polypeptide is Putative acid phosphatase 1 (Caenorhabditis elegans).